The sequence spans 212 residues: Thymidylate kinase (212 aa).

10 to 17 (GPEGAGKT) is an ATP binding site.

It belongs to the thymidylate kinase family.

It carries out the reaction dTMP + ATP = dTDP + ADP. Its function is as follows. Phosphorylation of dTMP to form dTDP in both de novo and salvage pathways of dTTP synthesis. In Bacillus pumilus (strain SAFR-032), this protein is Thymidylate kinase.